A 106-amino-acid polypeptide reads, in one-letter code: Small ribosomal subunit protein uS10 (106 aa).

The protein belongs to the universal ribosomal protein uS10 family. In terms of assembly, part of the 30S ribosomal subunit.

Functionally, involved in the binding of tRNA to the ribosomes. The sequence is that of Small ribosomal subunit protein uS10 from Solibacter usitatus (strain Ellin6076).